A 40-amino-acid chain; its full sequence is Photosystem II reaction center protein J (40 aa).

Residues 8–28 form a helical membrane-spanning segment; it reads IPLWVIGTVAGILVIGIIGIF.

The protein belongs to the PsbJ family. PSII is composed of 1 copy each of membrane proteins PsbA, PsbB, PsbC, PsbD, PsbE, PsbF, PsbH, PsbI, PsbJ, PsbK, PsbL, PsbM, PsbT, PsbX, PsbY, PsbZ, Psb30/Ycf12, at least 3 peripheral proteins of the oxygen-evolving complex and a large number of cofactors. It forms dimeric complexes.

It is found in the plastid. Its subcellular location is the chloroplast thylakoid membrane. Functionally, one of the components of the core complex of photosystem II (PSII). PSII is a light-driven water:plastoquinone oxidoreductase that uses light energy to abstract electrons from H(2)O, generating O(2) and a proton gradient subsequently used for ATP formation. It consists of a core antenna complex that captures photons, and an electron transfer chain that converts photonic excitation into a charge separation. The protein is Photosystem II reaction center protein J of Lobularia maritima (Sweet alyssum).